We begin with the raw amino-acid sequence, 422 residues long: Isocitrate dehydrogenase [NADP] (422 aa).

Thr94 is an NADP(+) binding site. Residues Ser103, Asn105, Arg109, Arg119, and Arg143 each coordinate D-threo-isocitrate. Asp310 is a binding site for Mg(2+). NADP(+)-binding positions include 344–350, Asn357, Tyr396, and Arg400; that span reads HGTAPKY.

Belongs to the isocitrate and isopropylmalate dehydrogenases family. Homodimer. Mg(2+) is required as a cofactor. It depends on Mn(2+) as a cofactor.

It catalyses the reaction D-threo-isocitrate + NADP(+) = 2-oxoglutarate + CO2 + NADPH. Catalyzes the oxidative decarboxylation of isocitrate to 2-oxoglutarate and carbon dioxide with the concomitant reduction of NADP(+). This Staphylococcus aureus (strain MSSA476) protein is Isocitrate dehydrogenase [NADP] (icd).